A 200-amino-acid polypeptide reads, in one-letter code: V-set and transmembrane domain-containing protein 5 (200 aa).

The signal sequence occupies residues 1-28 (MRPLPSGRRKTRGISLGLFALCLAAARC). At 29 to 147 (LQSQGVSLYI…VSEILYEDLH (119 aa)) the chain is on the extracellular side. An Ig-like C2-type domain is found at 37 to 139 (YIPQATINAT…QFGTIVLHVS (103 aa)). A glycan (N-linked (GlcNAc...) asparagine) is linked at asparagine 102. A helical transmembrane segment spans residues 148–168 (FVAVILAFLAAVAAVLISLMW). Residues 169–200 (VCNKCAYKFQRKRRHKLKESTTEEIELEDVEC) lie on the Cytoplasmic side of the membrane. Residues 170–186 (CNKCAYKFQRKRRHKLK) are important for CDC42-dependent filopodia induction.

As to quaternary structure, can homooligomerize through cis interactions within the same cell membrane. Post-translationally, N-glycosylated.

It localises to the cell membrane. The protein localises to the cell projection. The protein resides in the dendrite. It is found in the axon. Cell adhesion-like membrane protein of the central nervous system (CNS) which modulates both the position and complexity of central neurons by altering their membrane morphology and dynamics. Involved in the formation of neuronal dendrites and protrusions including dendritic filopodia. In synaptogenesis, regulates synapse formation by altering dendritic spine morphology and actin distribution. Promotes formation of unstable neuronal spines such as thin and branched types. Regulates neuronal morphogenesis and migration during cortical development in the brain. The chain is V-set and transmembrane domain-containing protein 5 (VSTM5) from Homo sapiens (Human).